The sequence spans 223 residues: Adenylate kinase 4, mitochondrial (223 aa).

Position 15–20 (15–20 (GSGKGT)) interacts with a ribonucleoside 5'-triphosphate. An NMP region spans residues 35–64 (SSGHLLRENLKTNTEVGDVAKQYLEKGLLV). Residues Ser36 and Arg41 each coordinate AMP. Lys60 bears the N6-succinyllysine mark. AMP is bound by residues 62–64 (LLV), 89–92 (GFPR), and Gln96. The segment at 125 to 162 (RRWIHPSSGRVYNLDFNPPQVLGVDDITGEPLVQQEDD) is LID. Residues Arg126 and 135–136 (VY) contribute to the a ribonucleoside 5'-triphosphate site. Residue Arg170 participates in AMP binding. Position 175 is an N6-acetyllysine (Lys175). N6-acetyllysine; alternate is present on residues Lys179 and Lys186. An N6-succinyllysine; alternate mark is found at Lys179 and Lys186. Thr199 is an a ribonucleoside 5'-triphosphate binding site.

This sequence belongs to the adenylate kinase family. AK3 subfamily. Monomer. Interacts with SLC25A5/ANT2. Expressed in the pyramidal cells in the hippocampus.

The protein localises to the mitochondrion matrix. The catalysed reaction is a ribonucleoside 5'-phosphate + ATP = a ribonucleoside 5'-diphosphate + ADP. It carries out the reaction AMP + ATP = 2 ADP. The enzyme catalyses GTP + AMP = GDP + ADP. It catalyses the reaction CMP + ATP = CDP + ADP. The catalysed reaction is GTP + CMP = CDP + GDP. It carries out the reaction dAMP + ATP = dADP + ADP. The enzyme catalyses dCMP + ATP = dCDP + ADP. It catalyses the reaction a 2'-deoxyribonucleoside 5'-diphosphate + ATP = a 2'-deoxyribonucleoside 5'-triphosphate + ADP. The catalysed reaction is a ribonucleoside 5'-diphosphate + ATP = a ribonucleoside 5'-triphosphate + ADP. It carries out the reaction GDP + ATP = GTP + ADP. The enzyme catalyses CDP + GTP = CTP + GDP. It catalyses the reaction CDP + ATP = CTP + ADP. The catalysed reaction is UDP + ATP = UTP + ADP. It carries out the reaction GTP + UDP = UTP + GDP. The enzyme catalyses dADP + GTP = dATP + GDP. It catalyses the reaction dCDP + GTP = dCTP + GDP. The catalysed reaction is dCDP + ATP = dCTP + ADP. It carries out the reaction dGDP + ATP = dGTP + ADP. The enzyme catalyses dTDP + GTP = dTTP + GDP. It catalyses the reaction dTDP + ATP = dTTP + ADP. Broad-specificity mitochondrial nucleoside phosphate kinase involved in cellular nucleotide homeostasis by catalyzing nucleoside-phosphate interconversions. Similar to other adenylate kinases, preferentially catalyzes the phosphorylation of the nucleoside monophosphate AMP with ATP as phosphate donor to produce ADP. Phosphorylates only AMP when using GTP as phosphate donor. In vitro, can also catalyze the phosphorylation of CMP, dAMP and dCMP and use GTP as an alternate phosphate donor. Moreover, exhibits a diphosphate kinase activity, producing ATP, CTP, GTP, UTP, TTP, dATP, dCTP and dGTP from the corresponding diphosphate substrates with either ATP or GTP as phosphate donors. Plays a role in controlling cellular ATP levels by regulating phosphorylation and activation of the energy sensor protein kinase AMPK. Plays a protective role in the cellular response to oxidative stress. The protein is Adenylate kinase 4, mitochondrial of Rattus norvegicus (Rat).